A 42-amino-acid polypeptide reads, in one-letter code: Photosystem I reaction center subunit IX (42 aa).

A helical transmembrane segment spans residues 8–28 (YLSTAPVLFTVWLSFTASFII).

The protein belongs to the PsaJ family.

Its subcellular location is the plastid. It is found in the chloroplast thylakoid membrane. May help in the organization of the PsaE and PsaF subunits. This chain is Photosystem I reaction center subunit IX, found in Rhodomonas salina (Cryptomonas salina).